A 350-amino-acid chain; its full sequence is GTPase Obg (350 aa).

The region spanning 1 to 159 is the Obg domain; it reads MKLVDEAEIL…RLLKLELKLL (159 aa). Positions 160–337 constitute an OBG-type G domain; the sequence is ADVGLLGFPN…IMKDVMAFFD (178 aa). GTP is bound by residues 166-173, 191-195, 213-216, 287-290, and 318-320; these read GFPNAGKS, FTTLY, DVPG, NKAD, and SAL. Positions 173 and 193 each coordinate Mg(2+).

This sequence belongs to the TRAFAC class OBG-HflX-like GTPase superfamily. OBG GTPase family. In terms of assembly, monomer. Mg(2+) serves as cofactor.

The protein localises to the cytoplasm. In terms of biological role, an essential GTPase which binds GTP, GDP and possibly (p)ppGpp with moderate affinity, with high nucleotide exchange rates and a fairly low GTP hydrolysis rate. Plays a role in control of the cell cycle, stress response, ribosome biogenesis and in those bacteria that undergo differentiation, in morphogenesis control. This chain is GTPase Obg, found in Xanthomonas campestris pv. campestris (strain 8004).